Reading from the N-terminus, the 245-residue chain is tRNA (guanine-N(7)-)-methyltransferase (245 aa).

The S-adenosyl-L-methionine site is built by E69, E94, D121, and D144. The active site involves D144. Substrate is bound by residues K148, D180, and 217–220 (TKFE). Positions 200–225 (NLSSSGDYVPRPENRPKTKFERRGEG) are disordered. Basic and acidic residues predominate over residues 209–225 (PRPENRPKTKFERRGEG).

This sequence belongs to the class I-like SAM-binding methyltransferase superfamily. TrmB family.

The enzyme catalyses guanosine(46) in tRNA + S-adenosyl-L-methionine = N(7)-methylguanosine(46) in tRNA + S-adenosyl-L-homocysteine. It functions in the pathway tRNA modification; N(7)-methylguanine-tRNA biosynthesis. In terms of biological role, catalyzes the formation of N(7)-methylguanine at position 46 (m7G46) in tRNA. The sequence is that of tRNA (guanine-N(7)-)-methyltransferase from Idiomarina loihiensis (strain ATCC BAA-735 / DSM 15497 / L2-TR).